The primary structure comprises 738 residues: Probable trehalase (738 aa).

A disordered region spans residues 1–44 (MLQGMPKRSGSISELHDPFSSPDVYYGPATDPRRQKQPNKYSRT). Residues arginine 289, 296 to 297 (WD), asparagine 333, arginine 342, 342 to 344 (RSQ), and glycine 463 contribute to the substrate site. Catalysis depends on proton donor/acceptor residues aspartate 465 and glutamate 660.

Belongs to the glycosyl hydrolase 37 family.

The enzyme catalyses alpha,alpha-trehalose + H2O = alpha-D-glucose + beta-D-glucose. The chain is Probable trehalase (NTH2) from Eremothecium gossypii (strain ATCC 10895 / CBS 109.51 / FGSC 9923 / NRRL Y-1056) (Yeast).